The primary structure comprises 130 residues: Small ribosomal subunit protein uS9 (130 aa).

This sequence belongs to the universal ribosomal protein uS9 family.

The sequence is that of Small ribosomal subunit protein uS9 from Shewanella denitrificans (strain OS217 / ATCC BAA-1090 / DSM 15013).